Here is a 158-residue protein sequence, read N- to C-terminus: Tryptophan-rich protein TspO (158 aa).

Transmembrane regions (helical) follow at residues 5–25, 48–68, 79–99, 105–125, and 134–154; these read ILTLALCIGLCLAVGFAGSTF, LFPPVWTILFIMMGTALAKVL, VGVVLFAIQLMLNLGWSASFF, LAGLVDIVLLWIFIVLTMLAF, and LLLVPYLCWVSFASYLNFTIL.

The protein belongs to the TspO/BZRP family.

The protein localises to the membrane. Its subcellular location is the cell membrane. Its function is as follows. Binds tetrapyrroles and promotes the photooxidative degradation of protoporphyrin IX. Can bind the benzodiazepine receptor agonist PK-11195 (in vitro); this interferes with photooxidative tetrapyrrole degradation. May play a role in the transmembrane transport of tetrapyrroles and similar compounds. This is Tryptophan-rich protein TspO from Chlorobaculum tepidum (strain ATCC 49652 / DSM 12025 / NBRC 103806 / TLS) (Chlorobium tepidum).